Reading from the N-terminus, the 459-residue chain is Chromosomal replication initiator protein DnaA (459 aa).

Residues 1–74 (MMEMPIDNLW…ANVVQSILGH (74 aa)) form a domain I, interacts with DnaA modulators region. The segment at 74–117 (HPVEIYITVAKGEEFEEIGGGGEWELPTTNIINETPNQNRQPNT) is domain II. The tract at residues 118–334 (ELNAKYVFSR…GALTRALAYI (217 aa)) is domain III, AAA+ region. ATP contacts are provided by Gly-162, Gly-164, Lys-165, and Thr-166. The segment at 335–459 (SIWGLPMTVA…IKMNSRSRKP (125 aa)) is domain IV, binds dsDNA.

Belongs to the DnaA family. Oligomerizes as a right-handed, spiral filament on DNA at oriC.

It localises to the cytoplasm. In terms of biological role, plays an essential role in the initiation and regulation of chromosomal replication. ATP-DnaA binds to the origin of replication (oriC) to initiate formation of the DNA replication initiation complex once per cell cycle. Binds the DnaA box (a 9 base pair repeat at the origin) and separates the double-stranded (ds)DNA. Forms a right-handed helical filament on oriC DNA; dsDNA binds to the exterior of the filament while single-stranded (ss)DNA is stabiized in the filament's interior. The ATP-DnaA-oriC complex binds and stabilizes one strand of the AT-rich DNA unwinding element (DUE), permitting loading of DNA polymerase. After initiation quickly degrades to an ADP-DnaA complex that is not apt for DNA replication. Binds acidic phospholipids. This Nostoc sp. (strain PCC 7120 / SAG 25.82 / UTEX 2576) protein is Chromosomal replication initiator protein DnaA.